Reading from the N-terminus, the 258-residue chain is Imidazole glycerol phosphate synthase subunit HisF (258 aa).

Residues Asp-11 and Asp-130 contribute to the active site.

This sequence belongs to the HisA/HisF family. Heterodimer of HisH and HisF.

Its subcellular location is the cytoplasm. The catalysed reaction is 5-[(5-phospho-1-deoxy-D-ribulos-1-ylimino)methylamino]-1-(5-phospho-beta-D-ribosyl)imidazole-4-carboxamide + L-glutamine = D-erythro-1-(imidazol-4-yl)glycerol 3-phosphate + 5-amino-1-(5-phospho-beta-D-ribosyl)imidazole-4-carboxamide + L-glutamate + H(+). The protein operates within amino-acid biosynthesis; L-histidine biosynthesis; L-histidine from 5-phospho-alpha-D-ribose 1-diphosphate: step 5/9. IGPS catalyzes the conversion of PRFAR and glutamine to IGP, AICAR and glutamate. The HisF subunit catalyzes the cyclization activity that produces IGP and AICAR from PRFAR using the ammonia provided by the HisH subunit. The protein is Imidazole glycerol phosphate synthase subunit HisF of Escherichia coli O1:K1 / APEC.